The primary structure comprises 338 residues: Trace amine-associated receptor 1 (338 aa).

The Extracellular portion of the chain corresponds to 1 to 24; it reads MPFCHNIINISCVKNNWSNDVRAS. 3 disulfides stabilise this stretch: C4/C177, C12/C87, and C95/C181. 2 N-linked (GlcNAc...) asparagine glycosylation sites follow: N9 and N16. The chain crosses the membrane as a helical span at residues 25 to 45; sequence LYSLMALIILTTLVGNLIVIV. The Cytoplasmic portion of the chain corresponds to 46–58; that stretch reads SISHFKQLHTPTN. Residues 59–79 traverse the membrane as a helical segment; the sequence is WLIHSMATVDFLLGCLVMPYS. The Extracellular portion of the chain corresponds to 80-97; it reads MVRSAEHCWYFGEVFCKI. The helical transmembrane segment at 98–118 threads the bilayer; it reads HTSTDIMLSSASIFHLSFISI. D102 is a binding site for 2-phenylethylamine. Residues 119–135 are Cytoplasmic-facing; that stretch reads DRYYAVCDPLRYKAKIN. Residues 136–156 traverse the membrane as a helical segment; that stretch reads ILVVCVMIFISWSVPAVFAFG. Residues 157 to 187 are Extracellular-facing; it reads MIFLELNFKGAEEIYYKHVHCRGGCSVFFSK. The chain crosses the membrane as a helical span at residues 188–208; that stretch reads ISGVLAFMTSFYIPGSIMLCI. At 209–251 the chain is on the cytoplasmic side; the sequence is YYRIYLIAKEQARSINDANQKLQIGLEMKNGISQSKERKAVKT. Residues 252–272 form a helical membrane-spanning segment; it reads LGIVMGVFLICWCPFFVCTVI. Topologically, residues 273–286 are extracellular; sequence DPFLHYTIPPTLND. A helical membrane pass occupies residues 287 to 307; the sequence is VLIWFGYLNSTFNPMVYAFFY. Residues 308–338 are Cytoplasmic-facing; that stretch reads PWFRKALKMILFGKIFQKDSSRCKLFLESSS.

This sequence belongs to the G-protein coupled receptor 1 family.

It is found in the endomembrane system. The protein localises to the endoplasmic reticulum membrane. Its subcellular location is the cell membrane. Intracellular G-protein coupled receptor for trace amines, which recognizes endogenous amine-containing metabolites such as beta-phenylethylamine (beta-PEA), 3-iodothyronamine (T1AM), isoamylamine (IAA), cadaverine (CAD), cyclohexylamine (CHA), p-tyramine (p-TYR), trimethylamine (TMA), octopamine and tryptamine. Also functions as a receptor for various drugs and psychoactive substances, such as amphetamine and methamphetamine. Unresponsive to classical biogenic amines, such as epinephrine and histamine and only partially activated by dopamine and serotonin. Expressed in both the central and peripheral nervous system: TAAR1 activation regulates the activity of several neurotransmitter signaling pathways by (1) decreasing the basal firing rates of the neurons involved and by (2) lowering the sensitivity of receptors to neurotransmitters. Ligand binding causes a conformation change that triggers signaling via guanine nucleotide-binding proteins (G proteins) and modulates the activity of downstream effectors. TAAR1 is coupled with different G(i)/G(o)-, G(s)- or G(q)/G(11) classes of G alpha proteins depending on the ligand. CAD-binding is coupled to G(i)/G(o) G alpha proteins and mediates inhibition of adenylate cyclase activity. T1AM- or beta-PEA-binding is coupled to G(s) G alpha proteins and mediates activation of adenylate cyclase activity. CHA- or IAA-binding is coupled to G(q)/G(11) G alpha proteins and activates phospholipase C-beta, releasing diacylglycerol (DAG) and inositol 1,4,5-trisphosphate (IP3) second messengers. TMA-binding is coupled with all three G(i)/G(o)-, G(s)- or G(q)/G(11) G alpha protein subtypes. In Macaca mulatta (Rhesus macaque), this protein is Trace amine-associated receptor 1 (TAAR1).